Here is a 21-residue protein sequence, read N- to C-terminus: Fibrinogen beta chain (21 aa).

Gln-1 carries the post-translational modification Pyrrolidone carboxylic acid. Positions 1–10 (QFPTDYDEGQ) are enriched in acidic residues. Residues 1-21 (QFPTDYDEGQDDRPKLGLGAR) form a disordered region. The O-linked (GalNAc...) threonine glycan is linked to Thr-4. Tyr-6 is subject to Sulfotyrosine.

As to quaternary structure, heterohexamer; disulfide linked. Contains 2 sets of 3 non-identical chains (alpha, beta and gamma). The 2 heterotrimers are in head to head conformation with the N-termini in a small central domain. Conversion of fibrinogen to fibrin is triggered by thrombin, which cleaves fibrinopeptides A and B from alpha and beta chains, and thus exposes the N-terminal polymerization sites responsible for the formation of the soft clot.

It is found in the secreted. In terms of biological role, cleaved by the protease thrombin to yield monomers which, together with fibrinogen alpha (FGA) and fibrinogen gamma (FGG), polymerize to form an insoluble fibrin matrix. Fibrin has a major function in hemostasis as one of the primary components of blood clots. In addition, functions during the early stages of wound repair to stabilize the lesion and guide cell migration during re-epithelialization. Was originally thought to be essential for platelet aggregation, based on in vitro studies using anticoagulated blood. However subsequent studies have shown that it is not absolutely required for thrombus formation in vivo. Enhances expression of SELP in activated platelets. Maternal fibrinogen is essential for successful pregnancy. Fibrin deposition is also associated with infection, where it protects against IFNG-mediated hemorrhage. May also facilitate the antibacterial immune response via both innate and T-cell mediated pathways. The protein is Fibrinogen beta chain (FGB) of Bubalus bubalis (Domestic water buffalo).